Consider the following 120-residue polypeptide: UPF0231 protein YacL (120 aa).

The protein belongs to the UPF0231 family.

The polypeptide is UPF0231 protein YacL (Escherichia fergusonii (strain ATCC 35469 / DSM 13698 / CCUG 18766 / IAM 14443 / JCM 21226 / LMG 7866 / NBRC 102419 / NCTC 12128 / CDC 0568-73)).